The sequence spans 235 residues: Voltage-gated hydrogen channel 1 (235 aa).

The Cytoplasmic segment spans residues 1 to 65 (MSRYLKHFTA…SLRKLYSTER (65 aa)). A helical transmembrane segment spans residues 66–86 (FQIVVVCLVVLDAIFVLCELL). Residues 87 to 103 (IDLSIIEADHHRIAPQV) are Extracellular-facing. The chain crosses the membrane as a helical span at residues 104–126 (FHYLSLALLTFFMVELAGKIFAY). Over 127 to 134 (RLEFLHHK) the chain is Cytoplasmic. Residues 135-155 (FEVFDGIVVVVSFILDIIYIS) form a helical membrane-spanning segment. The Extracellular portion of the chain corresponds to 156 to 162 (KEDAFDA). Residues 163–183 (MGLLILLRLWRVARIINGILV) form a helical membrane-spanning segment. The Cytoplasmic portion of the chain corresponds to 184-235 (SVQNRANHRVEKLKEINESLVHQVNELKEQNTKMDQENVRLRALLKDHSIDF). Positions 187–231 (NRANHRVEKLKEINESLVHQVNELKEQNTKMDQENVRLRALLKDH) form a coiled coil.

It belongs to the hydrogen channel family. As to quaternary structure, homodimer.

The protein localises to the membrane. It localises to the cell membrane. In terms of biological role, mediates the voltage-dependent proton permeability of excitable membranes. Forms a proton-selective channel through which protons may pass in accordance with their electrochemical gradient. This is Voltage-gated hydrogen channel 1 (hvcn1) from Danio rerio (Zebrafish).